Consider the following 154-residue polypeptide: Iron-sulfur cluster assembly 2 homolog, mitochondrial (154 aa).

The transit peptide at Met1–Ser8 directs the protein to the mitochondrion. The tract at residues Ser29–Gln49 is disordered. The segment covering Ser39 to Gln49 has biased composition (low complexity). Positions 79, 144, and 146 each coordinate Fe cation.

This sequence belongs to the HesB/IscA family. Heterotetramer; forms a dimer of dimers with IBA57. Interacts with [2Fe-2S]-ISCA2 forming the heterodimer [2Fe- 2S]-ISCA2-IBA57 complex; [2Fe-2S] cluster binding is absolutely required to promote the complex formation.

It is found in the mitochondrion. In terms of biological role, involved in the maturation of mitochondrial 4Fe-4S proteins functioning late in the iron-sulfur cluster assembly pathway. May be involved in the binding of an intermediate of Fe/S cluster assembly. In Homo sapiens (Human), this protein is Iron-sulfur cluster assembly 2 homolog, mitochondrial (ISCA2).